The sequence spans 259 residues: Deoxyribose-phosphate aldolase (259 aa).

Asp-102 serves as the catalytic Proton donor/acceptor. Residue Lys-167 is the Schiff-base intermediate with acetaldehyde of the active site. Catalysis depends on Lys-201, which acts as the Proton donor/acceptor.

Belongs to the DeoC/FbaB aldolase family. DeoC type 2 subfamily.

The protein localises to the cytoplasm. The enzyme catalyses 2-deoxy-D-ribose 5-phosphate = D-glyceraldehyde 3-phosphate + acetaldehyde. Its pathway is carbohydrate degradation; 2-deoxy-D-ribose 1-phosphate degradation; D-glyceraldehyde 3-phosphate and acetaldehyde from 2-deoxy-alpha-D-ribose 1-phosphate: step 2/2. Its function is as follows. Catalyzes a reversible aldol reaction between acetaldehyde and D-glyceraldehyde 3-phosphate to generate 2-deoxy-D-ribose 5-phosphate. This Enterobacter sp. (strain 638) protein is Deoxyribose-phosphate aldolase.